We begin with the raw amino-acid sequence, 137 residues long: Large ribosomal subunit protein uL16c (137 aa).

The protein belongs to the universal ribosomal protein uL16 family. Part of the 50S ribosomal subunit.

It is found in the plastid. This chain is Large ribosomal subunit protein uL16c (rpl16), found in Helicosporidium sp. subsp. Simulium jonesii (Green alga).